Here is a 256-residue protein sequence, read N- to C-terminus: Chlorophyll a-b binding protein CP24 10B, chloroplastic (256 aa).

Residues 1–45 (MTTTSATAVLNGLSSSFLTGGKKTQALLGAHVTARVTTPKRFVVA) constitute a chloroplast transit peptide. 2 consecutive transmembrane segments (helical) span residues 106–126 (WAMAAVLGIFVGQAWSGIPWF) and 134–154 (AIAPFSFGSLLGTQLLLMGWV).

The protein belongs to the ELIP/psbS family.

Its subcellular location is the plastid. The protein localises to the chloroplast thylakoid membrane. This is Chlorophyll a-b binding protein CP24 10B, chloroplastic (CAP10B) from Solanum lycopersicum (Tomato).